The following is a 437-amino-acid chain: Homogentisate 1,2-dioxygenase (437 aa).

The interval Asn15–Ser34 is disordered. Positions 336, 342, and 372 each coordinate Fe cation.

It belongs to the homogentisate dioxygenase family. Fe cation is required as a cofactor. As to expression, expressed in the hypodermis and intestine.

The catalysed reaction is homogentisate + O2 = 4-maleylacetoacetate + H(+). The protein operates within amino-acid degradation; L-phenylalanine degradation; acetoacetate and fumarate from L-phenylalanine: step 4/6. In terms of biological role, plays a role in the tyrosine degradation pathway. This chain is Homogentisate 1,2-dioxygenase, found in Caenorhabditis elegans.